The following is a 336-amino-acid chain: tRNA N6-adenosine threonylcarbamoyltransferase (336 aa).

Fe cation-binding residues include His114 and His118. Residues 136–140 (LVSGG), Asp169, Gly182, Asp186, and Asn275 contribute to the substrate site. Asp301 contributes to the Fe cation binding site.

It belongs to the KAE1 / TsaD family. Requires Fe(2+) as cofactor.

Its subcellular location is the cytoplasm. The enzyme catalyses L-threonylcarbamoyladenylate + adenosine(37) in tRNA = N(6)-L-threonylcarbamoyladenosine(37) in tRNA + AMP + H(+). In terms of biological role, required for the formation of a threonylcarbamoyl group on adenosine at position 37 (t(6)A37) in tRNAs that read codons beginning with adenine. Is involved in the transfer of the threonylcarbamoyl moiety of threonylcarbamoyl-AMP (TC-AMP) to the N6 group of A37, together with TsaE and TsaB. TsaD likely plays a direct catalytic role in this reaction. In Streptococcus pneumoniae (strain P1031), this protein is tRNA N6-adenosine threonylcarbamoyltransferase.